The sequence spans 455 residues: Chromosomal replication initiator protein DnaA (455 aa).

The domain I, interacts with DnaA modulators stretch occupies residues Met-1–Glu-82. The interval Glu-82–Thr-117 is domain II. Residues Gly-118–Ala-335 form a domain III, AAA+ region region. ATP contacts are provided by Gly-163, Gly-165, Lys-166, and Thr-167. The tract at residues Glu-336 to Ala-455 is domain IV, binds dsDNA.

The protein belongs to the DnaA family. Oligomerizes as a right-handed, spiral filament on DNA at oriC.

The protein resides in the cytoplasm. In terms of biological role, plays an essential role in the initiation and regulation of chromosomal replication. ATP-DnaA binds to the origin of replication (oriC) to initiate formation of the DNA replication initiation complex once per cell cycle. Binds the DnaA box (a 9 base pair repeat at the origin) and separates the double-stranded (ds)DNA. Forms a right-handed helical filament on oriC DNA; dsDNA binds to the exterior of the filament while single-stranded (ss)DNA is stabiized in the filament's interior. The ATP-DnaA-oriC complex binds and stabilizes one strand of the AT-rich DNA unwinding element (DUE), permitting loading of DNA polymerase. After initiation quickly degrades to an ADP-DnaA complex that is not apt for DNA replication. Binds acidic phospholipids. The chain is Chromosomal replication initiator protein DnaA from Actinobacillus succinogenes (strain ATCC 55618 / DSM 22257 / CCUG 43843 / 130Z).